The sequence spans 178 residues: uncharacterized protein (178 aa).

Residues 1–89 (MSAKEGSSHP…GEKKGKTEKL (89 aa)) are disordered. 2 stretches are compositionally biased toward basic and acidic residues: residues 44–53 (PYQKNEKVVV) and 61–89 (AFLH…TEKL).

This is an uncharacterized protein from Schizosaccharomyces pombe (strain 972 / ATCC 24843) (Fission yeast).